We begin with the raw amino-acid sequence, 367 residues long: C-C chemokine receptor type 6 (367 aa).

Residues 1-39 lie on the Extracellular side of the membrane; it reads MNSTESYFGTDDYDNTEYYSIPPDHGPCSLEEVRNFTKV. N-linked (GlcNAc...) asparagine glycosylation is found at N2 and N35. Residues 40-66 form a helical membrane-spanning segment; the sequence is FVPIAYSLICVFGLLGNIMVVMTFAFY. Topologically, residues 67–75 are cytoplasmic; it reads KKARSMTDV. The chain crosses the membrane as a helical span at residues 76–96; sequence YLLNMAITDILFVLTLPFWAV. Residues 97–111 are Extracellular-facing; it reads THATNTWVFSDALCK. C110 and C189 are disulfide-bonded. The helical transmembrane segment at 112-133 threads the bilayer; it reads LMKGTYAVNFNCGMLLLACISM. Residues 134–151 are Cytoplasmic-facing; sequence DRYIAIVQATKSFRVRSR. The helical transmembrane segment at 152-172 threads the bilayer; sequence TLTHSKVICVAVWFISIIISS. Residues 173–203 are Extracellular-facing; that stretch reads PTFIFNKKYELQDRDVCEPRYRSVSEPITWK. The chain crosses the membrane as a helical span at residues 204–230; the sequence is LLGMGLELFFGFFTPLLFMVFCYLFII. At 231-246 the chain is on the cytoplasmic side; the sequence is KTLVQAQNSKRHRAIR. A helical transmembrane segment spans residues 247 to 271; the sequence is VVIAVVLVFLACQIPHNMVLLVTAV. The Extracellular portion of the chain corresponds to 272–295; it reads NTGKVGRSCSTEKVLAYTRNVAEV. The chain crosses the membrane as a helical span at residues 296 to 313; sequence LAFLHCCLNPVLYAFIGQ. Topologically, residues 314–367 are cytoplasmic; sequence KFRNYFMKIMKDVWCMRRKNKMPGFLCARVYSESYISRQTSETVENDNASSFTM.

The protein belongs to the G-protein coupled receptor 1 family. Sperm. Mainly localized in the principal piece and neck region of the tail but is also found in the acrosomal region in a small percentage of sperm cells. Expressed in natural regulatory T cells (nTregs) and a subset of early thymocyte progenitor double-negative 1 (DN1) cells. Expressed in memory B cells. Expressed by IL17 producing helper T-cells (Th17), type 1 effector cells (Th1), type 2 effector cells (Th2) and regulatory T-cells (Treg) (at protein level). Expressed by Th17 cells in spleen, Peyers patches, and lamina propria of small and large intestine. Highly expressed in testis, lung, colon, and dendritic cells.

It localises to the cell membrane. The protein localises to the cell surface. In terms of biological role, receptor for the C-C type chemokine CCL20. Binds to CCL20 and subsequently transduces a signal by increasing the intracellular calcium ion levels. Although CCL20 is its major ligand it can also act as a receptor for non-chemokine ligands such as beta-defensins. Binds to defensin DEFB1 leading to increase in intracellular calcium ions and cAMP levels. Its binding to DEFB1 is essential for the function of DEFB1 in regulating sperm motility and bactericidal activity. Binds to defensins DEFB4 and DEFB4A/B and mediates their chemotactic effects. The ligand-receptor pair CCL20-CCR6 is responsible for the chemotaxis of dendritic cells (DC), effector/memory T-cells and B-cells and plays an important role at skin and mucosal surfaces under homeostatic and inflammatory conditions, as well as in pathology, including cancer and various autoimmune diseases. CCR6-mediated signals are essential for immune responses to microbes in the intestinal mucosa and in the modulation of inflammatory responses initiated by tissue insult and trauma. CCR6 is essential for the recruitment of both the pro-inflammatory IL17 producing helper T-cells (Th17) and the regulatory T-cells (Treg) to sites of inflammation. Required for the normal migration of Th17 cells in Peyers patches and other related tissue sites of the intestine and plays a role in regulating effector T-cell balance and distribution in inflamed intestine. Plays an important role in the coordination of early thymocyte precursor migration events important for normal subsequent thymocyte precursor development, but is not required for the formation of normal thymic natural regulatory T-cells (nTregs). Required for optimal differentiation of DN2 and DN3 thymocyte precursors. Essential for B-cell localization in the subepithelial dome of Peyers-patches and for efficient B-cell isotype switching to IgA in the Peyers-patches. Essential for appropriate anatomical distribution of memory B-cells in the spleen and for the secondary recall response of memory B-cells. Positively regulates sperm motility and chemotaxis via its binding to CCL20. This Mus musculus (Mouse) protein is C-C chemokine receptor type 6 (Ccr6).